A 123-amino-acid polypeptide reads, in one-letter code: Large ribosomal subunit protein bL17 (123 aa).

Belongs to the bacterial ribosomal protein bL17 family. Part of the 50S ribosomal subunit. Contacts protein L32.

The protein is Large ribosomal subunit protein bL17 of Borreliella burgdorferi (strain ATCC 35210 / DSM 4680 / CIP 102532 / B31) (Borrelia burgdorferi).